The following is a 355-amino-acid chain: Polyferredoxin protein FwdF (355 aa).

4Fe-4S ferredoxin-type domains are found at residues 24-53 (RELC…MGPL), 64-93 (PKLD…LKIN), 108-137 (RDIK…VERE), 147-176 (GEIN…LKYN), 187-216 (TDIE…VICY), 235-264 (GKTV…VEKP), 267-296 (GELI…FPKP), and 304-333 (PRII…VKRT). 32 residues coordinate [4Fe-4S] cluster: C33, C36, C39, C43, C73, C76, C79, C83, C117, C120, C123, C127, C156, C159, C162, C166, C196, C199, C202, C206, C244, C247, C250, C254, C276, C279, C282, C286, C313, C316, C319, and C323.

[4Fe-4S] cluster is required as a cofactor.

This is Polyferredoxin protein FwdF (fwdF) from Methanocaldococcus jannaschii (strain ATCC 43067 / DSM 2661 / JAL-1 / JCM 10045 / NBRC 100440) (Methanococcus jannaschii).